We begin with the raw amino-acid sequence, 94 residues long: Small ribosomal subunit protein bS18 (94 aa).

Residues M1–E12 are compositionally biased toward low complexity. Residues M1–K29 form a disordered region. Over residues R16–K29 the composition is skewed to basic residues.

It belongs to the bacterial ribosomal protein bS18 family. As to quaternary structure, part of the 30S ribosomal subunit. Forms a tight heterodimer with protein bS6.

Functionally, binds as a heterodimer with protein bS6 to the central domain of the 16S rRNA, where it helps stabilize the platform of the 30S subunit. The protein is Small ribosomal subunit protein bS18 of Leuconostoc citreum (strain KM20).